The sequence spans 394 residues: 8-amino-7-oxononanoate synthase (394 aa).

Arg21 contacts substrate. Residue 112 to 113 (GY) participates in pyridoxal 5'-phosphate binding. His137 serves as a coordination point for substrate. 3 residues coordinate pyridoxal 5'-phosphate: Ser183, His211, and Thr239. Position 242 is an N6-(pyridoxal phosphate)lysine (Lys242). Thr358 provides a ligand contact to substrate.

The protein belongs to the class-II pyridoxal-phosphate-dependent aminotransferase family. BioF subfamily. As to quaternary structure, homodimer. Pyridoxal 5'-phosphate is required as a cofactor.

The catalysed reaction is 6-carboxyhexanoyl-[ACP] + L-alanine + H(+) = (8S)-8-amino-7-oxononanoate + holo-[ACP] + CO2. It participates in cofactor biosynthesis; biotin biosynthesis. In terms of biological role, catalyzes the decarboxylative condensation of pimeloyl-[acyl-carrier protein] and L-alanine to produce 8-amino-7-oxononanoate (AON), [acyl-carrier protein], and carbon dioxide. The chain is 8-amino-7-oxononanoate synthase from Burkholderia cenocepacia (strain ATCC BAA-245 / DSM 16553 / LMG 16656 / NCTC 13227 / J2315 / CF5610) (Burkholderia cepacia (strain J2315)).